The following is an 88-amino-acid chain: Elongation factor 1-beta (88 aa).

The protein belongs to the EF-1-beta/EF-1-delta family.

Promotes the exchange of GDP for GTP in EF-1-alpha/GDP, thus allowing the regeneration of EF-1-alpha/GTP that could then be used to form the ternary complex EF-1-alpha/GTP/AAtRNA. This chain is Elongation factor 1-beta (ef1b), found in Thermoplasma volcanium (strain ATCC 51530 / DSM 4299 / JCM 9571 / NBRC 15438 / GSS1).